A 127-amino-acid polypeptide reads, in one-letter code: UPF0166 protein PH1503 (127 aa).

This sequence belongs to the UPF0166 family.

This Pyrococcus horikoshii (strain ATCC 700860 / DSM 12428 / JCM 9974 / NBRC 100139 / OT-3) protein is UPF0166 protein PH1503.